Reading from the N-terminus, the 232-residue chain is 2,3,4,5-tetrahydropyridine-2,6-dicarboxylate N-acetyltransferase (232 aa).

The protein belongs to the transferase hexapeptide repeat family. DapH subfamily.

It catalyses the reaction (S)-2,3,4,5-tetrahydrodipicolinate + acetyl-CoA + H2O = L-2-acetamido-6-oxoheptanedioate + CoA. Its pathway is amino-acid biosynthesis; L-lysine biosynthesis via DAP pathway; LL-2,6-diaminopimelate from (S)-tetrahydrodipicolinate (acetylase route): step 1/3. Its function is as follows. Catalyzes the transfer of an acetyl group from acetyl-CoA to tetrahydrodipicolinate. This chain is 2,3,4,5-tetrahydropyridine-2,6-dicarboxylate N-acetyltransferase, found in Kosmotoga olearia (strain ATCC BAA-1733 / DSM 21960 / TBF 19.5.1).